Reading from the N-terminus, the 252-residue chain is Triosephosphate isomerase (252 aa).

Residue 10-12 coordinates substrate; it reads NWK. The Electrophile role is filled by His96. Catalysis depends on Glu168, which acts as the Proton acceptor. Substrate contacts are provided by residues Gly174, Ser214, and 235-236; that span reads GG.

This sequence belongs to the triosephosphate isomerase family. Homodimer.

It localises to the cytoplasm. The enzyme catalyses D-glyceraldehyde 3-phosphate = dihydroxyacetone phosphate. It functions in the pathway carbohydrate biosynthesis; gluconeogenesis. The protein operates within carbohydrate degradation; glycolysis; D-glyceraldehyde 3-phosphate from glycerone phosphate: step 1/1. Functionally, involved in the gluconeogenesis. Catalyzes stereospecifically the conversion of dihydroxyacetone phosphate (DHAP) to D-glyceraldehyde-3-phosphate (G3P). This Streptococcus pneumoniae serotype 2 (strain D39 / NCTC 7466) protein is Triosephosphate isomerase.